Here is a 157-residue protein sequence, read N- to C-terminus: Succinate dehydrogenase assembly factor 2-A, mitochondrial (157 aa).

The protein belongs to the SDHAF2 family. In terms of assembly, interacts with the flavoprotein subunit within the SDH catalytic dimer.

Its subcellular location is the mitochondrion matrix. Functionally, plays an essential role in the assembly of succinate dehydrogenase (SDH), an enzyme complex (also referred to as respiratory complex II) that is a component of both the tricarboxylic acid (TCA) cycle and the mitochondrial electron transport chain, and which couples the oxidation of succinate to fumarate with the reduction of ubiquinone (coenzyme Q) to ubiquinol. Required for flavinylation (covalent attachment of FAD) of the flavoprotein subunit of the SDH catalytic dimer. The sequence is that of Succinate dehydrogenase assembly factor 2-A, mitochondrial from Drosophila willistoni (Fruit fly).